Consider the following 482-residue polypeptide: tRNA sulfurtransferase (482 aa).

A THUMP domain is found at 61–165 (LAIRDALTRI…DDRLLLIKGR (105 aa)). Residues 183 to 184 (LI), Lys-265, Gly-287, and Gln-296 each bind ATP. A disulfide bond links Cys-344 and Cys-456. The Rhodanese domain maps to 404–482 (FGPNDVILDI…GFNNVKVYRP (79 aa)). Cys-456 functions as the Cysteine persulfide intermediate in the catalytic mechanism.

Belongs to the ThiI family.

Its subcellular location is the cytoplasm. It carries out the reaction [ThiI sulfur-carrier protein]-S-sulfanyl-L-cysteine + a uridine in tRNA + 2 reduced [2Fe-2S]-[ferredoxin] + ATP + H(+) = [ThiI sulfur-carrier protein]-L-cysteine + a 4-thiouridine in tRNA + 2 oxidized [2Fe-2S]-[ferredoxin] + AMP + diphosphate. The catalysed reaction is [ThiS sulfur-carrier protein]-C-terminal Gly-Gly-AMP + S-sulfanyl-L-cysteinyl-[cysteine desulfurase] + AH2 = [ThiS sulfur-carrier protein]-C-terminal-Gly-aminoethanethioate + L-cysteinyl-[cysteine desulfurase] + A + AMP + 2 H(+). The protein operates within cofactor biosynthesis; thiamine diphosphate biosynthesis. In terms of biological role, catalyzes the ATP-dependent transfer of a sulfur to tRNA to produce 4-thiouridine in position 8 of tRNAs, which functions as a near-UV photosensor. Also catalyzes the transfer of sulfur to the sulfur carrier protein ThiS, forming ThiS-thiocarboxylate. This is a step in the synthesis of thiazole, in the thiamine biosynthesis pathway. The sulfur is donated as persulfide by IscS. This chain is tRNA sulfurtransferase, found in Escherichia coli O8 (strain IAI1).